Here is a 250-residue protein sequence, read N- to C-terminus: Triosephosphate isomerase, glycosomal (250 aa).

Residues asparagine 11 and lysine 13 each coordinate substrate. Residue histidine 95 is the Electrophile of the active site. The active-site Proton acceptor is glutamate 167.

This sequence belongs to the triosephosphate isomerase family. In terms of assembly, homodimer.

It localises to the glycosome. The catalysed reaction is D-glyceraldehyde 3-phosphate = dihydroxyacetone phosphate. Its pathway is carbohydrate biosynthesis; gluconeogenesis. It functions in the pathway carbohydrate degradation; glycolysis; D-glyceraldehyde 3-phosphate from glycerone phosphate: step 1/1. The sequence is that of Triosephosphate isomerase, glycosomal from Trypanosoma brucei brucei.